Consider the following 641-residue polypeptide: RING finger containing E3 ubiquitin-protein ligase WSV403 (641 aa).

The RING-type; atypical zinc-finger motif lies at 329–371 (CVGCLYDIEDEKRCYKLPCGHFMHTFCLSNKCSKANFRCVKCF).

It catalyses the reaction S-ubiquitinyl-[E2 ubiquitin-conjugating enzyme]-L-cysteine + [acceptor protein]-L-lysine = [E2 ubiquitin-conjugating enzyme]-L-cysteine + N(6)-ubiquitinyl-[acceptor protein]-L-lysine.. The protein operates within protein modification; protein ubiquitination. In terms of biological role, probable E3 ubiquitin-protein ligase which accepts ubiquitin from an E2 ubiquitin-conjugating enzyme in the form of a thioester and then directly transfers the ubiquitin to targeted substrates. This White spot syndrome virus (isolate Shrimp/China/Tongan/1996) (WSSV) protein is RING finger containing E3 ubiquitin-protein ligase WSV403.